The sequence spans 166 residues: MSEQQRQGAERDLYRDTWVRYLGYANEVGEAFRSLVPAAVVWLSYGVSSSYVLADAIDKGKKAGEVPSPEAGRNTRMALAVVDTFVWQSLASVAIPGFTINRLCAASLYVLGTMTHWPPTVRKWTTTTLGLLAIPVIIHPIDRSVDFLLDSSLRKLYPSVEKPSTP.

Helical transmembrane passes span 34–54 and 78–98; these read SLVP…YVLA and ALAV…IPGF. N6-succinyllysine is present on lysine 123. The chain crosses the membrane as a helical span at residues 129–149; sequence LGLLAIPVIIHPIDRSVDFLL.

Belongs to the MTFP1 family.

The protein localises to the mitochondrion inner membrane. In terms of biological role, involved in the mitochondrial division probably by regulating membrane fission. Loss-of-function leads to apoptosis. This chain is Mitochondrial fission process protein 1 (Mtfp1), found in Mus musculus (Mouse).